A 746-amino-acid chain; its full sequence is NAD(P)H-quinone oxidoreductase subunit 5, chloroplastic (746 aa).

16 consecutive transmembrane segments (helical) span residues 9–29 (YIIL…LLFV), 40–60 (WAFV…NLAI), 88–108 (LIDP…IMVL), 125–145 (FAYM…SNLI), 147–167 (IHIF…FWFT), 185–205 (GDFG…SLEF), 225–245 (FAIL…AQFP), 258–278 (TPIS…FLVA), 283–303 (LFIV…ITLL), 327–347 (LGYI…FHLI), 354–374 (ALLF…VGYS), 396–416 (TTFL…CFWS), 425–445 (WLYS…TAFY), 554–574 (LFPL…GIPF), 610–630 (IFSV…YGSV), and 726–746 (YLFL…YFDF).

Belongs to the complex I subunit 5 family. As to quaternary structure, NDH is composed of at least 16 different subunits, 5 of which are encoded in the nucleus.

The protein localises to the plastid. It is found in the chloroplast thylakoid membrane. The enzyme catalyses a plastoquinone + NADH + (n+1) H(+)(in) = a plastoquinol + NAD(+) + n H(+)(out). It carries out the reaction a plastoquinone + NADPH + (n+1) H(+)(in) = a plastoquinol + NADP(+) + n H(+)(out). In terms of biological role, NDH shuttles electrons from NAD(P)H:plastoquinone, via FMN and iron-sulfur (Fe-S) centers, to quinones in the photosynthetic chain and possibly in a chloroplast respiratory chain. The immediate electron acceptor for the enzyme in this species is believed to be plastoquinone. Couples the redox reaction to proton translocation, and thus conserves the redox energy in a proton gradient. This Dioscorea elephantipes (Elephant's foot yam) protein is NAD(P)H-quinone oxidoreductase subunit 5, chloroplastic (ndhF).